Reading from the N-terminus, the 568-residue chain is Proline--tRNA ligase (568 aa).

The protein belongs to the class-II aminoacyl-tRNA synthetase family. ProS type 1 subfamily. In terms of assembly, homodimer.

The protein resides in the cytoplasm. It carries out the reaction tRNA(Pro) + L-proline + ATP = L-prolyl-tRNA(Pro) + AMP + diphosphate. Functionally, catalyzes the attachment of proline to tRNA(Pro) in a two-step reaction: proline is first activated by ATP to form Pro-AMP and then transferred to the acceptor end of tRNA(Pro). As ProRS can inadvertently accommodate and process non-cognate amino acids such as alanine and cysteine, to avoid such errors it has two additional distinct editing activities against alanine. One activity is designated as 'pretransfer' editing and involves the tRNA(Pro)-independent hydrolysis of activated Ala-AMP. The other activity is designated 'posttransfer' editing and involves deacylation of mischarged Ala-tRNA(Pro). The misacylated Cys-tRNA(Pro) is not edited by ProRS. In Listeria welshimeri serovar 6b (strain ATCC 35897 / DSM 20650 / CCUG 15529 / CIP 8149 / NCTC 11857 / SLCC 5334 / V8), this protein is Proline--tRNA ligase.